Reading from the N-terminus, the 190-residue chain is UPF0200 protein TGAM_0868 (190 aa).

Residue Gly-7–Ser-14 coordinates ATP.

Belongs to the UPF0200 family.

In Thermococcus gammatolerans (strain DSM 15229 / JCM 11827 / EJ3), this protein is UPF0200 protein TGAM_0868.